Reading from the N-terminus, the 207-residue chain is Nitrile hydratase subunit alpha (207 aa).

Cys110, Cys113, Ser114, and Cys115 together coordinate Fe(3+). The residue at position 113 (Cys113) is a Cysteine sulfinic acid (-SO2H). Cys115 is modified (cysteine sulfenic acid (-SOH)).

The protein belongs to the nitrile hydratase subunit alpha family. Heterodimer of an alpha and a beta chain. The cofactor is Fe(3+). Oxidation on Cys-113 is essential for the activity. Post-translationally, oxidation on Cys-115 stabilizes the Fe-NO ligand coordinated in the inactive form.

It catalyses the reaction an aliphatic primary amide = an aliphatic nitrile + H2O. Inactivated by nitrosylation of the iron center in the dark and activated by photo-induced nitric oxide (NO) release. Inactivated by oxidation of Cys-115 to a sulfenic acid. NHase catalyzes the hydration of various nitrile compounds to the corresponding amides. Industrial production of acrylamide is now being developed using some of the enzymes of this class. This is Nitrile hydratase subunit alpha (nthA) from Rhodococcus erythropolis (Arthrobacter picolinophilus).